We begin with the raw amino-acid sequence, 312 residues long: Copper chaperone for superoxide dismutase, chloroplastic (312 aa).

The transit peptide at 1–78 (MVGFLRALTA…AAAAATADLS (78 aa)) directs the protein to the chloroplast. The HMA domain maps to 89 to 152 (ELMTEFMVDM…TLHQTGRDAR (64 aa)). Residues C100, C103, C301, and C303 each coordinate Cu cation.

It in the C-terminal section; belongs to the Cu-Zn superoxide dismutase family. Requires Cu(2+) as cofactor.

It is found in the plastid. It localises to the chloroplast. Functionally, copper chaperone for superoxide dismutases (SODs). Binds copper ions and delivers them specifically to SODs. Is required for assistance in SODs disulfide bond formation and thereby activation of SODs. The protein is Copper chaperone for superoxide dismutase, chloroplastic (CCS) of Oryza sativa subsp. japonica (Rice).